An 89-amino-acid chain; its full sequence is Small ribosomal subunit protein uS15 (89 aa).

Belongs to the universal ribosomal protein uS15 family. Part of the 30S ribosomal subunit. Forms a bridge to the 50S subunit in the 70S ribosome, contacting the 23S rRNA.

One of the primary rRNA binding proteins, it binds directly to 16S rRNA where it helps nucleate assembly of the platform of the 30S subunit by binding and bridging several RNA helices of the 16S rRNA. Functionally, forms an intersubunit bridge (bridge B4) with the 23S rRNA of the 50S subunit in the ribosome. The sequence is that of Small ribosomal subunit protein uS15 from Arthrobacter sp. (strain FB24).